Here is a 323-residue protein sequence, read N- to C-terminus: Thiamine-monophosphate kinase (323 aa).

Aspartate 30, serine 45, threonine 46, and aspartate 47 together coordinate Mg(2+). Histidine 54 lines the substrate pocket. Residues aspartate 75 and aspartate 122 each coordinate Mg(2+). ATP contacts are provided by residues 121 to 122 (GD) and arginine 146. Aspartate 212 is a binding site for Mg(2+). An ATP-binding site is contributed by serine 214. Aspartate 215 serves as a coordination point for Mg(2+). Substrate is bound by residues glutamate 263 and phenylalanine 319.

The protein belongs to the thiamine-monophosphate kinase family.

It carries out the reaction thiamine phosphate + ATP = thiamine diphosphate + ADP. It functions in the pathway cofactor biosynthesis; thiamine diphosphate biosynthesis; thiamine diphosphate from thiamine phosphate: step 1/1. Its function is as follows. Catalyzes the ATP-dependent phosphorylation of thiamine-monophosphate (TMP) to form thiamine-pyrophosphate (TPP), the active form of vitamin B1. This Buchnera aphidicola subsp. Acyrthosiphon pisum (strain APS) (Acyrthosiphon pisum symbiotic bacterium) protein is Thiamine-monophosphate kinase.